Reading from the N-terminus, the 513-residue chain is Maturase K (513 aa).

Belongs to the intron maturase 2 family. MatK subfamily.

The protein localises to the plastid. It is found in the chloroplast. Its function is as follows. Usually encoded in the trnK tRNA gene intron. Probably assists in splicing its own and other chloroplast group II introns. This Sporobolus michauxianus (Prairie cordgrass) protein is Maturase K.